The sequence spans 610 residues: Chaperone protein DnaK (610 aa).

At Thr173 the chain carries Phosphothreonine; by autocatalysis. Disordered regions lie at residues Glu525–Thr544 and Ala576–Lys610. Basic and acidic residues predominate over residues Glu529–Leu542. Residues Ala576 to Asn592 are compositionally biased toward low complexity. Residues Ala599 to Lys610 show a composition bias toward basic and acidic residues.

It belongs to the heat shock protein 70 family.

Functionally, acts as a chaperone. The polypeptide is Chaperone protein DnaK (Staphylococcus aureus (strain Mu3 / ATCC 700698)).